We begin with the raw amino-acid sequence, 1131 residues long: DNA-directed RNA polymerase subunit beta (1131 aa).

Residues 1108–1131 (QLARRTPPRPTYESLSRESLDDDE) are disordered. The segment covering 1122–1131 (LSRESLDDDE) has biased composition (basic and acidic residues).

Belongs to the RNA polymerase beta chain family. In terms of assembly, in cyanobacteria the RNAP catalytic core is composed of 2 alpha, 1 beta, 1 beta', 1 gamma and 1 omega subunit. When a sigma factor is associated with the core the holoenzyme is formed, which can initiate transcription.

The enzyme catalyses RNA(n) + a ribonucleoside 5'-triphosphate = RNA(n+1) + diphosphate. Its function is as follows. DNA-dependent RNA polymerase catalyzes the transcription of DNA into RNA using the four ribonucleoside triphosphates as substrates. The polypeptide is DNA-directed RNA polymerase subunit beta (Nostoc sp. (strain PCC 7120 / SAG 25.82 / UTEX 2576)).